The chain runs to 100 residues: Small ribosomal subunit protein uS14c (100 aa).

The protein belongs to the universal ribosomal protein uS14 family. In terms of assembly, part of the 30S ribosomal subunit.

The protein localises to the plastid. It is found in the chloroplast. Binds 16S rRNA, required for the assembly of 30S particles. This Euglena gracilis protein is Small ribosomal subunit protein uS14c.